Here is a 124-residue protein sequence, read N- to C-terminus: Ribonuclease pancreatic (124 aa).

Substrate-binding residues include lysine 7 and arginine 10. The active-site Proton acceptor is histidine 12. Cystine bridges form between cysteine 26–cysteine 84, cysteine 40–cysteine 95, cysteine 58–cysteine 110, and cysteine 65–cysteine 72. A glycan (N-linked (GlcNAc...) asparagine) is linked at asparagine 34. Substrate-binding positions include 41-45 (KPVNT), lysine 66, and arginine 85. Histidine 119 acts as the Proton donor in catalysis.

The protein belongs to the pancreatic ribonuclease family. As to quaternary structure, monomer. Interacts with and forms tight 1:1 complexes with RNH1. Dimerization of two such complexes may occur. Interaction with RNH1 inhibits this protein. Pancreas.

It localises to the secreted. The catalysed reaction is an [RNA] containing cytidine + H2O = an [RNA]-3'-cytidine-3'-phosphate + a 5'-hydroxy-ribonucleotide-3'-[RNA].. The enzyme catalyses an [RNA] containing uridine + H2O = an [RNA]-3'-uridine-3'-phosphate + a 5'-hydroxy-ribonucleotide-3'-[RNA].. In terms of biological role, endonuclease that catalyzes the cleavage of RNA on the 3' side of pyrimidine nucleotides. Acts on single-stranded and double-stranded RNA. The sequence is that of Ribonuclease pancreatic (RNASE1) from Mesocricetus auratus (Golden hamster).